We begin with the raw amino-acid sequence, 473 residues long: Glutamate-1-semialdehyde 2,1-aminomutase, chloroplastic (473 aa).

Residues 1–37 (MSATLTGSGTALGFSCSSKISKRVSSSPSTRCSIKMS) constitute a chloroplast transit peptide. Lys-313 is modified (N6-(pyridoxal phosphate)lysine).

It belongs to the class-III pyridoxal-phosphate-dependent aminotransferase family. HemL subfamily. In terms of assembly, homodimer. It depends on pyridoxal 5'-phosphate as a cofactor.

The protein localises to the plastid. Its subcellular location is the chloroplast. It catalyses the reaction (S)-4-amino-5-oxopentanoate = 5-aminolevulinate. It participates in porphyrin-containing compound metabolism; protoporphyrin-IX biosynthesis; 5-aminolevulinate from L-glutamyl-tRNA(Glu): step 2/2. Its pathway is porphyrin-containing compound metabolism; chlorophyll biosynthesis. The protein is Glutamate-1-semialdehyde 2,1-aminomutase, chloroplastic (GSA) of Brassica napus (Rape).